The chain runs to 328 residues: Methionyl-tRNA formyltransferase (328 aa).

Ser-121 to Pro-124 contacts (6S)-5,6,7,8-tetrahydrofolate.

Belongs to the Fmt family.

The enzyme catalyses L-methionyl-tRNA(fMet) + (6R)-10-formyltetrahydrofolate = N-formyl-L-methionyl-tRNA(fMet) + (6S)-5,6,7,8-tetrahydrofolate + H(+). Its function is as follows. Attaches a formyl group to the free amino group of methionyl-tRNA(fMet). The formyl group appears to play a dual role in the initiator identity of N-formylmethionyl-tRNA by promoting its recognition by IF2 and preventing the misappropriation of this tRNA by the elongation apparatus. In Paraburkholderia phytofirmans (strain DSM 17436 / LMG 22146 / PsJN) (Burkholderia phytofirmans), this protein is Methionyl-tRNA formyltransferase.